The chain runs to 960 residues: Dynamin-like GTPase OPA1, mitochondrial (960 aa).

A mitochondrion-targeting transit peptide spans 1 to 87 (MWRAGRAAVA…IKYGYQPRRN (87 aa)). The Mitochondrial matrix segment spans residues 88-96 (FWPARLAAR). The helical transmembrane segment at 97 to 113 (LLKLRYIILGSAVGGGY) threads the bilayer. Topologically, residues 114-770 (TAKKTFDEWK…NAIENMIGPD (657 aa)) are mitochondrial intermembrane. Residues 210–254 (SDKEKIDQLQEELLHTQLKYQRILERLEKENKELRKLVLQKDDKG) are a coiled coil. Positions 217 to 222 (QLQEEL) match the LQQQIQ motif motif. At K228 the chain carries N6-acetyllysine. A Dynamin-type G domain is found at 285–561 (QDHLPRVVVV…FWKMVRESVE (277 aa)). The segment at 295-302 (GDQSAGKT) is G1 motif. 6 residues coordinate GTP: S298, G300, K301, T302, S303, and G317. T302 provides a ligand contact to Mg(2+). The segment at 321–324 (MMTR) is G2 motif. 2 residues coordinate Mg(2+): T323 and D398. The segment at 398–401 (DLPG) is G3 motif. A G4 motif region spans residues 467-470 (TKVD). Residues K468, D470, and T503 each contribute to the GTP site. The G5 motif stretch occupies residues 501–504 (VVTG). Stalk region regions lie at residues 589–836 (DRNE…IKDT) and 874–928 (CNDV…VKLL). The paddle region stretch occupies residues 736–856 (SDKQQWDAAI…KTALNHCNLC (121 aa)). The stretch at 771–781 (WKKRWMYWKNR) is an intramembrane region. At 782–960 (TQEQCVHNET…AFIEALHQEK (179 aa)) the chain is on the mitochondrial intermembrane side. Residues C856 and C874 are joined by a disulfide bond. Residues 895 to 960 (RQQLTNTEVR…AFIEALHQEK (66 aa)) are a coiled coil.

The protein belongs to the TRAFAC class dynamin-like GTPase superfamily. Dynamin/Fzo/YdjA family. In terms of assembly, oligomeric complex consisting of membrane-bound and soluble forms of OPA1. Interacts with RCC1L; RCC1L acts as a guanine nucleotide exchange factor (GEF) for OPA1 by exchanging bound GDP for free GTP. Interacts with CHCHD3 and IMMT; these interactions occur preferentially with soluble OPA1 forms. Interacts with PRELID1. In terms of processing, cleaved by OMA1 or YME1L downstream of the transmembrane region in response to different signals to generate soluble forms. Cleaved by OMA1 at position S1 following stress conditions, generating the short soluble form (Dynamin-like GTPase OPA1, short form; S-OPA1). AFG3L2 is involved in the regulation of OMA1-dependent processing of OPA1. PARL-dependent proteolytic processing releases an antiapoptotic soluble form not required for mitochondrial fusion. Cleavage at position S2 by YME1L is required to mediate oxidative phosphorylation (OXPHOS)-induced mitochondrial fusion. Cleavage occurs in the sequence motif Leu-Gln-Gln-Gln-Ile-Gln (LQQQIQ). Post-translationally, cleavage at position S3 by YME1L is required for membrane tubulation. As to expression, detected in brain (at protein level). Detected in brain, brain stem, heart, kidney, liver and skeletal muscle.

The protein resides in the mitochondrion inner membrane. It is found in the mitochondrion intermembrane space. It carries out the reaction GTP + H2O = GDP + phosphate + H(+). Its activity is regulated as follows. Activated by guanine nucleotide exchange factor RCC1L. In terms of biological role, dynamin-related GTPase that is essential for normal mitochondrial morphology by mediating fusion of the mitochondrial inner membranes, regulating cristae morphology and maintaining respiratory chain function. Exists in two forms: the transmembrane, long form (Dynamin-like GTPase OPA1, long form; L-OPA1), which is tethered to the inner mitochondrial membrane, and the short soluble form (Dynamin-like GTPase OPA1, short form; S-OPA1), which results from proteolytic cleavage and localizes in the intermembrane space. Both forms (L-OPA1 and S-OPA1) cooperate to catalyze the fusion of the mitochondrial inner membrane. The equilibrium between L-OPA1 and S-OPA1 is essential: excess levels of S-OPA1, produced by cleavage by OMA1 following loss of mitochondrial membrane potential, lead to an impaired equilibrium between L-OPA1 and S-OPA1, inhibiting mitochondrial fusion. The balance between L-OPA1 and S-OPA1 also influences cristae shape and morphology. Involved in remodeling cristae and the release of cytochrome c during apoptosis. Proteolytic processing by PARL in response to intrinsic apoptotic signals may lead to disassembly of OPA1 oligomers and release of the caspase activator cytochrome C (CYCS) into the mitochondrial intermembrane space. Acts as a regulator of T-helper Th17 cells, which are characterized by cells with fused mitochondria with tight cristae, by mediating mitochondrial membrane remodeling: OPA1 is required for interleukin-17 (IL-17) production. Its role in mitochondrial morphology is required for mitochondrial genome maintenance. Its function is as follows. Constitutes the transmembrane long form (L-OPA1) that plays a central role in mitochondrial inner membrane fusion and cristae morphology. L-OPA1 and the soluble short form (S-OPA1) form higher-order helical assemblies that coordinate the fusion of mitochondrial inner membranes. Inner membrane-anchored L-OPA1 molecules initiate membrane remodeling by recruiting soluble S-OPA1 to rapidly polymerize into a flexible cylindrical scaffold encaging the mitochondrial inner membrane. Once at the membrane surface, the formation of S-OPA1 helices induce bilayer curvature. OPA1 dimerization through the paddle region, which inserts into cardiolipin-containing membrane, promotes GTP hydrolysis and the helical assembly of a flexible OPA1 lattice on the membrane, which drives membrane curvature and mitochondrial fusion. Plays a role in the maintenance and remodeling of mitochondrial cristae, some invaginations of the mitochondrial inner membrane that provide an increase in the surface area. Probably acts by forming helical filaments at the inside of inner membrane tubes with the shape and dimensions of crista junctions. The equilibrium between L-OPA1 and S-OPA1 influences cristae shape and morphology: increased L-OPA1 levels promote cristae stacking and elongated mitochondria, while increased S-OPA1 levels correlated with irregular cristae packing and round mitochondria shape. Constitutes the soluble short form (S-OPA1) generated by cleavage by OMA1, which plays a central role in mitochondrial inner membrane fusion and cristae morphology. The transmembrane long form (L-OPA1) and the S-OPA1 form higher-order helical assemblies that coordinate the fusion of mitochondrial inner membranes. Inner membrane-anchored L-OPA1 molecules initiate membrane remodeling by recruiting soluble S-OPA1 to rapidly polymerize into a flexible cylindrical scaffold encaging the mitochondrial inner membrane. Once at the membrane surface, the formation of S-OPA1 helices induce bilayer curvature. OPA1 dimerization through the paddle region, which inserts into cardiolipin-containing membrane, promotes GTP hydrolysis and the helical assembly of a flexible OPA1 lattice on the membrane, which drives membrane curvature and mitochondrial fusion. Excess levels of S-OPA1 produced by cleavage by OMA1 following stress conditions that induce loss of mitochondrial membrane potential, lead to an impaired equilibrium between L-OPA1 and S-OPA1, thereby inhibiting mitochondrial fusion. Involved in mitochondrial safeguard in response to transient mitochondrial membrane depolarization by mediating flickering: cleavage by OMA1 leads to excess production of S-OPA1, preventing mitochondrial hyperfusion. Plays a role in the maintenance and remodeling of mitochondrial cristae, some invaginations of the mitochondrial inner membrane that provide an increase in the surface area. Probably acts by forming helical filaments at the inside of inner membrane tubes with the shape and dimensions of crista junctions. The equilibrium between L-OPA1 and S-OPA1 influences cristae shape and morphology: increased L-OPA1 levels promote cristae stacking and elongated mitochondria, while increased S-OPA1 levels correlated with irregular cristae packing and round mitochondria shape. Functionally, isoforms that contain the alternative exon 4b are required for mitochondrial genome maintenance, possibly by anchoring the mitochondrial nucleoids to the inner mitochondrial membrane. This Mus musculus (Mouse) protein is Dynamin-like GTPase OPA1, mitochondrial.